The following is a 113-amino-acid chain: Putative pterin-4-alpha-carbinolamine dehydratase (113 aa).

This sequence belongs to the pterin-4-alpha-carbinolamine dehydratase family.

The catalysed reaction is (4aS,6R)-4a-hydroxy-L-erythro-5,6,7,8-tetrahydrobiopterin = (6R)-L-erythro-6,7-dihydrobiopterin + H2O. The polypeptide is Putative pterin-4-alpha-carbinolamine dehydratase (Idiomarina loihiensis (strain ATCC BAA-735 / DSM 15497 / L2-TR)).